The following is a 197-amino-acid chain: MATDAKLVKTLREMTGAGILECKKALEETGGNLEEAVELLRKRGIAKAAKKAGRETKEGIIHSYIHAGGRVGVLLELNCETDFVARNEVFKELANEIALQIAAMKPQYVSREDIPREVIEKEGEIAREAAIAEGKPEHIAEKIAEGKLEKFFKEVCLLEQPYIKDDKKTIEDLIKEYIAKLGENIKVSRFCRYEIGE.

The segment at 81-84 (TDFV) is involved in Mg(2+) ion dislocation from EF-Tu.

Belongs to the EF-Ts family.

Its subcellular location is the cytoplasm. In terms of biological role, associates with the EF-Tu.GDP complex and induces the exchange of GDP to GTP. It remains bound to the aminoacyl-tRNA.EF-Tu.GTP complex up to the GTP hydrolysis stage on the ribosome. The protein is Elongation factor Ts of Persephonella marina (strain DSM 14350 / EX-H1).